The following is a 1442-amino-acid chain: Trafficking protein particle complex subunit 10 (1442 aa).

Positions 1–23 are enriched in polar residues; the sequence is MSNVSPNSMNLNGSTSSTASVND. Disordered regions lie at residues 1–86, 251–277, 535–564, 1208–1238, 1316–1335, and 1422–1442; these read MSNV…SSSS, TSSG…TSTK, GSSS…NSGI, LSSS…NHSK, QQQQ…QKQQ, and LQDN…TNKT. Low complexity predominate over residues 39–86; sequence SSSSASSISNSNSSSSNNLKPSTQPLSSSSTLNTPTQFSLQHSSSSSS. A compositionally biased stretch (low complexity) spans 535-553; the sequence is GSSSSNTPSSTSATTAANG. Residues 554–564 are compositionally biased toward polar residues; it reads KNTPMPSNSGI. Over residues 1208 to 1236 the composition is skewed to low complexity; it reads LSSSTSPSSATDSSNSNGNNNNNNNNNNH. Residues 1425–1442 show a composition bias toward low complexity; that stretch reads NNNNNNNSINSQTSTNKT.

The protein belongs to the TMEM1 family. In terms of assembly, part of the multisubunit TRAPP (transport protein particle) complex.

It is found in the golgi apparatus. It localises to the cis-Golgi network. May play a role in vesicular transport from endoplasmic reticulum to Golgi. In Dictyostelium discoideum (Social amoeba), this protein is Trafficking protein particle complex subunit 10 (trapcc10-1).